The sequence spans 499 residues: Lysine--tRNA ligase (499 aa).

Residues Glu-408 and Glu-415 each contribute to the Mg(2+) site.

The protein belongs to the class-II aminoacyl-tRNA synthetase family. As to quaternary structure, homodimer. Mg(2+) serves as cofactor.

The protein resides in the cytoplasm. It carries out the reaction tRNA(Lys) + L-lysine + ATP = L-lysyl-tRNA(Lys) + AMP + diphosphate. The protein is Lysine--tRNA ligase of Thermoanaerobacter sp. (strain X514).